The following is a 219-amino-acid chain: Small ribosomal subunit protein uS3c (219 aa).

A KH type-2 domain is found at 47–118 (IRNHVRNSSN…KLRMTLVEVL (72 aa)).

Belongs to the universal ribosomal protein uS3 family. Part of the 30S ribosomal subunit.

It localises to the plastid. The protein localises to the chloroplast. This is Small ribosomal subunit protein uS3c (rps3) from Chara vulgaris (Common stonewort).